The sequence spans 155 residues: MGLSGVLHVEVEVKSPAEKFWVALGDGINLFPKAFPNDYKTIQVLAGDGNAPGSIRLITYGEGSPLVKISAERIEAVDLENKSMSYSIIGGEMLEYYKTFKGTITVIPKDGGSLLKWSGEFEKTAHEIDDPHVIKDFAVKNFKEIDEYLLKQTSA.

The protein belongs to the MLP family.

In Arabidopsis thaliana (Mouse-ear cress), this protein is MLP-like protein 423 (MLP423).